Here is a 423-residue protein sequence, read N- to C-terminus: Glucose-1-phosphate adenylyltransferase (423 aa).

Residues Tyr108, Gly173, Glu188 to Lys189, and Ser207 contribute to the alpha-D-glucose 1-phosphate site.

Belongs to the bacterial/plant glucose-1-phosphate adenylyltransferase family. Homotetramer.

It carries out the reaction alpha-D-glucose 1-phosphate + ATP + H(+) = ADP-alpha-D-glucose + diphosphate. Its pathway is glycan biosynthesis; glycogen biosynthesis. Functionally, involved in the biosynthesis of ADP-glucose, a building block required for the elongation reactions to produce glycogen. Catalyzes the reaction between ATP and alpha-D-glucose 1-phosphate (G1P) to produce pyrophosphate and ADP-Glc. This Francisella tularensis subsp. holarctica (strain FTNF002-00 / FTA) protein is Glucose-1-phosphate adenylyltransferase.